The sequence spans 420 residues: Mitochondrial chaperone BCS1 (420 aa).

Residues 1 to 15 are Mitochondrial intermembrane-facing; sequence MTLSDFIGALKDNPY. The chain crosses the membrane as a helical span at residues 16–32; the sequence is FGAGFGLVGVGTALAVA. Residues 33–420 are Mitochondrial matrix-facing; sequence RKGAQVGMIF…AIKNIAEIKD (388 aa). ATP is bound at residue 230–237; the sequence is GPPGCGKS.

The protein belongs to the AAA ATPase family. BCS1 subfamily.

It localises to the mitochondrion inner membrane. It catalyses the reaction ATP + H2O = ADP + phosphate + H(+). Chaperone necessary for the incorporation of Rieske iron-sulfur protein uqcrfs1 into the mitochondrial respiratory chain complex III. The polypeptide is Mitochondrial chaperone BCS1 (bcs1l) (Danio rerio (Zebrafish)).